The primary structure comprises 258 residues: MLAKDFLFMKNIRITIEYDGTGYAGWQRQAGSFCTVQGEIERILSQILQEDIRLAGAGRTDKGVHARAQIATFKSRSSLGPDRMVHSMNALLPNTIRISDPLVVPEGFHARHSAKEREYRYFVREEPSAVLGRFSGCSYGSLDLMSMNRVASYVLGEHDFSVFSKETRDRTGCLCRVISCKWFRQREFFVLRISANRFLRSMVRYLAALMIDSGKGLLSPEEAREMIESGILTRQLVPAAPNGLFLWKITYGSDSHSF.

D61 functions as the Nucleophile in the catalytic mechanism. Substrate is bound at residue Y119.

The protein belongs to the tRNA pseudouridine synthase TruA family. As to quaternary structure, homodimer.

It catalyses the reaction uridine(38/39/40) in tRNA = pseudouridine(38/39/40) in tRNA. Functionally, formation of pseudouridine at positions 38, 39 and 40 in the anticodon stem and loop of transfer RNAs. The chain is tRNA pseudouridine synthase A from Chlorobium phaeobacteroides (strain DSM 266 / SMG 266 / 2430).